The sequence spans 571 residues: Proline--tRNA ligase (571 aa).

This sequence belongs to the class-II aminoacyl-tRNA synthetase family. ProS type 1 subfamily. In terms of assembly, homodimer.

It is found in the cytoplasm. It carries out the reaction tRNA(Pro) + L-proline + ATP = L-prolyl-tRNA(Pro) + AMP + diphosphate. Functionally, catalyzes the attachment of proline to tRNA(Pro) in a two-step reaction: proline is first activated by ATP to form Pro-AMP and then transferred to the acceptor end of tRNA(Pro). As ProRS can inadvertently accommodate and process non-cognate amino acids such as alanine and cysteine, to avoid such errors it has two additional distinct editing activities against alanine. One activity is designated as 'pretransfer' editing and involves the tRNA(Pro)-independent hydrolysis of activated Ala-AMP. The other activity is designated 'posttransfer' editing and involves deacylation of mischarged Ala-tRNA(Pro). The misacylated Cys-tRNA(Pro) is not edited by ProRS. The chain is Proline--tRNA ligase from Azotobacter vinelandii (strain DJ / ATCC BAA-1303).